The chain runs to 371 residues: uncharacterized protein (371 aa).

The 4Fe-4S ferredoxin-type domain occupies 110-140 (MEKFIDFDRCNKCGECARKICKAKWTPLNYL).

This is an uncharacterized protein from Methanocaldococcus jannaschii (strain ATCC 43067 / DSM 2661 / JAL-1 / JCM 10045 / NBRC 100440) (Methanococcus jannaschii).